We begin with the raw amino-acid sequence, 240 residues long: Carboxy-S-adenosyl-L-methionine synthase (240 aa).

Residues tyrosine 35, 61 to 63, 86 to 87, 112 to 113, and arginine 194 contribute to the S-adenosyl-L-methionine site; these read GCS, DN, and DI.

This sequence belongs to the class I-like SAM-binding methyltransferase superfamily. Cx-SAM synthase family. In terms of assembly, homodimer.

It catalyses the reaction prephenate + S-adenosyl-L-methionine = carboxy-S-adenosyl-L-methionine + 3-phenylpyruvate + H2O. Its function is as follows. Catalyzes the conversion of S-adenosyl-L-methionine (SAM) to carboxy-S-adenosyl-L-methionine (Cx-SAM). In Wolinella succinogenes (strain ATCC 29543 / DSM 1740 / CCUG 13145 / JCM 31913 / LMG 7466 / NCTC 11488 / FDC 602W) (Vibrio succinogenes), this protein is Carboxy-S-adenosyl-L-methionine synthase.